A 37-amino-acid chain; its full sequence is Conotoxin Bt1.8 (37 aa).

The propeptide occupies 1–20; that stretch reads PDGRNAAAKAFDLITPTVRK. Cystine bridges form between Cys-22/Cys-28 and Cys-23/Cys-36. At Cys-36 the chain carries Cysteine amide.

Belongs to the conotoxin A superfamily. As to expression, expressed by the venom duct.

The protein localises to the secreted. Functionally, alpha-conotoxins bind to the nicotinic acetylcholine receptors (nAChR) and inhibit them. This toxin inhibits mammalian alpha-3-beta-2/CHRNA3-CHRNB2 nAChR (IC(50)=9.4 nM (rat), IC(50)=8.8 nM (human)), as well as the subunit chimera alpha-6/alpha-3-beta-2-beta-3 nAChR (CHRNA6/CHRNA3-CHRNB2-CHRNB3)(IC(50)=2.1 nM (rat), IC(50)=1.7 nM (human)). Binds to rat alpha-6/alpha-3-beta-2-beta-3 more rapidly than to alpha-3-beta-2, and dissociates more rapidly from alpha-3-beta-2 than from alpha-6/alpha-3-beta-2-beta-3. This Conus betulinus (Beech cone) protein is Conotoxin Bt1.8.